The chain runs to 120 residues: Inner membrane protein YidG (120 aa).

Topologically, residues 1–21 (MPDSRKARRIADPGLQPERTS) are cytoplasmic. Residues 22–39 (LAWFRTMLGYGALMALAI) form a helical membrane-spanning segment. The Periplasmic portion of the chain corresponds to 40-48 (KHNWHQAGM). A helical transmembrane segment spans residues 49-68 (LFWISIGILAIVALILWHYT). The Cytoplasmic portion of the chain corresponds to 69–90 (RNRNLMDVTNSDFSQFHVVRDK). The helical transmembrane segment at 91–113 (FLISLAVLSLAILFAVTHIHQLI) threads the bilayer. At 114–120 (VFIERVA) the chain is on the periplasmic side.

The protein localises to the cell inner membrane. In Escherichia coli O157:H7, this protein is Inner membrane protein YidG (yidG).